Reading from the N-terminus, the 139-residue chain is Cuticle protein 76 (139 aa).

6 tandem repeats follow at residues 7-10 (AAPA), 68-71 (AAPA), 75-78 (AAPV), 93-95 (AAP), 105-108 (AAPA), and 121-124 (AAPA).

In terms of biological role, component of the cuticle of migratory locust which contains more than 100 different structural proteins. The polypeptide is Cuticle protein 76 (Locusta migratoria (Migratory locust)).